Consider the following 342-residue polypeptide: Global transcription regulator FGP1 (342 aa).

The disordered stretch occupies residues 91–113; it reads FSPGEKKRASKKPKKQAGVAKAY.

This sequence belongs to the MIT1/WOR1 family.

It is found in the nucleus. Global transcriptional regulator of pathogenicity. Regulates many genes during growth in putrescine medium and during infection. Involved in the developmental processes of conidium formation and sexual reproduction and modulates a morphological change that accompanies mycotoxin production. This chain is Global transcription regulator FGP1, found in Gibberella zeae (strain ATCC MYA-4620 / CBS 123657 / FGSC 9075 / NRRL 31084 / PH-1) (Wheat head blight fungus).